We begin with the raw amino-acid sequence, 58 residues long: Large ribosomal subunit protein bL32 (58 aa).

Belongs to the bacterial ribosomal protein bL32 family.

The protein is Large ribosomal subunit protein bL32 of Staphylococcus aureus (strain NCTC 8325 / PS 47).